Here is a 161-residue protein sequence, read N- to C-terminus: MTQDELYMKEAIKEAKKAEEKGEVPIGAVLVINGEIIARAHNLRETEQRSIAHAEMLVIDEACKALGTWRLEGATLYVTLEPCPMCAGAVVLSRVEKVVFGAFDPKGGCSGTLMNLLQEERFNHQAEVVSGVLEEECGGMLSAFFRELRKKKKAARKNLSE.

The CMP/dCMP-type deaminase domain occupies 2–120 (TQDELYMKEA…GTLMNLLQEE (119 aa)). Position 53 (histidine 53) interacts with Zn(2+). Glutamate 55 (proton donor) is an active-site residue. Positions 83 and 86 each coordinate Zn(2+).

The protein belongs to the cytidine and deoxycytidylate deaminase family. In terms of assembly, homodimer. Zn(2+) serves as cofactor.

It carries out the reaction adenosine(34) in tRNA + H2O + H(+) = inosine(34) in tRNA + NH4(+). Functionally, catalyzes the deamination of adenosine to inosine at the wobble position 34 of tRNA(Arg2). The chain is tRNA-specific adenosine deaminase from Bacillus subtilis (strain 168).